Reading from the N-terminus, the 159-residue chain is Transcription elongation factor GreA (159 aa).

A coiled-coil region spans residues 7–72; that stretch reads MTVRGAEKLR…IQEIESKLSN (66 aa).

The protein belongs to the GreA/GreB family.

Functionally, necessary for efficient RNA polymerase transcription elongation past template-encoded arresting sites. The arresting sites in DNA have the property of trapping a certain fraction of elongating RNA polymerases that pass through, resulting in locked ternary complexes. Cleavage of the nascent transcript by cleavage factors such as GreA or GreB allows the resumption of elongation from the new 3'terminus. GreA releases sequences of 2 to 3 nucleotides. This is Transcription elongation factor GreA from Buchnera aphidicola subsp. Schizaphis graminum (strain Sg).